The following is a 456-amino-acid chain: Adenylosuccinate synthetase (456 aa).

Residues 11-17 (GDEGKGG) and 39-41 (GHT) contribute to the GTP site. Residue Asp-12 is the Proton acceptor of the active site. Asp-12 and Gly-39 together coordinate Mg(2+). IMP is bound by residues 12–15 (DEGK), 37–40 (NAGH), Thr-127, Arg-141, Gln-232, Thr-247, and Arg-328. His-40 (proton donor) is an active-site residue. Residue 324–330 (TVTGRPR) coordinates substrate. GTP is bound by residues Arg-330, 356–358 (HLD), and 441–443 (GVG).

This sequence belongs to the adenylosuccinate synthetase family. In terms of assembly, homodimer. Mg(2+) serves as cofactor.

Its subcellular location is the cytoplasm. It catalyses the reaction IMP + L-aspartate + GTP = N(6)-(1,2-dicarboxyethyl)-AMP + GDP + phosphate + 2 H(+). Its pathway is purine metabolism; AMP biosynthesis via de novo pathway; AMP from IMP: step 1/2. Its function is as follows. Plays an important role in the de novo pathway of purine nucleotide biosynthesis. Catalyzes the first committed step in the biosynthesis of AMP from IMP. The chain is Adenylosuccinate synthetase from Natronomonas pharaonis (strain ATCC 35678 / DSM 2160 / CIP 103997 / JCM 8858 / NBRC 14720 / NCIMB 2260 / Gabara) (Halobacterium pharaonis).